The chain runs to 266 residues: GRIP and coiled-coil domain-containing protein C365.11 (266 aa).

The segment covering 1–13 (METTVSAKNSLEN) has biased composition (polar residues). The disordered stretch occupies residues 1-88 (METTVSAKNS…LDEKVKELEN (88 aa)). Ser-10 carries the phosphoserine modification. Residues 36–49 (ASKKKRKNRKKKKN) are compositionally biased toward basic residues. The span at 63–88 (EEQRSGSIDSKDKEKPLDEKVKELEN) shows a compositional bias: basic and acidic residues. Residues 73-188 (KDKEKPLDEK…ESVKSHESEL (116 aa)) adopt a coiled-coil conformation. 2 positions are modified to phosphoserine: Ser-202 and Ser-204. The region spanning 216–264 (ISKELINKEYARNVLLQFLENHEHRDKILPILSTALDLEEVHQHLILKN) is the GRIP domain.

It is found in the cytoplasm. The chain is GRIP and coiled-coil domain-containing protein C365.11 from Schizosaccharomyces pombe (strain 972 / ATCC 24843) (Fission yeast).